A 265-amino-acid chain; its full sequence is NAD-capped RNA hydrolase NudC (265 aa).

Arg76 contributes to the substrate binding site. Residues Cys106, Cys109, Cys124, and Cys127 each contribute to the Zn(2+) site. Residue Tyr132 coordinates substrate. The region spanning 133–256 (PRISPAMMVL…SIAHRLIRHA (124 aa)) is the Nudix hydrolase domain. 3 residues coordinate a divalent metal cation: Ala166, Glu182, and Glu186. Residues 167 to 188 (GFVEPGETLEECVHRETWEEVG) carry the Nudix box motif. 200–207 (QSWPFPHS) serves as a coordination point for substrate. An a divalent metal cation-binding site is contributed by Glu227. A substrate-binding site is contributed by Ala249.

The protein belongs to the Nudix hydrolase family. NudC subfamily. In terms of assembly, homodimer. Requires Mg(2+) as cofactor. Mn(2+) is required as a cofactor. It depends on Zn(2+) as a cofactor.

It catalyses the reaction a 5'-end NAD(+)-phospho-ribonucleoside in mRNA + H2O = a 5'-end phospho-adenosine-phospho-ribonucleoside in mRNA + beta-nicotinamide D-ribonucleotide + 2 H(+). It carries out the reaction NAD(+) + H2O = beta-nicotinamide D-ribonucleotide + AMP + 2 H(+). The catalysed reaction is NADH + H2O = reduced beta-nicotinamide D-ribonucleotide + AMP + 2 H(+). Its function is as follows. mRNA decapping enzyme that specifically removes the nicotinamide adenine dinucleotide (NAD) cap from a subset of mRNAs by hydrolyzing the diphosphate linkage to produce nicotinamide mononucleotide (NMN) and 5' monophosphate mRNA. The NAD-cap is present at the 5'-end of some mRNAs and stabilizes RNA against 5'-processing. Has preference for mRNAs with a 5'-end purine. Catalyzes the hydrolysis of a broad range of dinucleotide pyrophosphates. The protein is NAD-capped RNA hydrolase NudC of Chromobacterium violaceum (strain ATCC 12472 / DSM 30191 / JCM 1249 / CCUG 213 / NBRC 12614 / NCIMB 9131 / NCTC 9757 / MK).